A 531-amino-acid polypeptide reads, in one-letter code: Tryptophan biosynthesis protein TRP1 (531 aa).

An indole-3-glycerol phosphate synthase region spans residues 1 to 254 (MGNILEEIAA…TVKDLLQNVT (254 aa)). Positions 255-531 (RHSESGEFAL…TLKIDEETEN (277 aa)) are N-(5'-phosphoribosyl)anthranilate isomerase.

It in the N-terminal section; belongs to the TrpC family. In the C-terminal section; belongs to the TrpF family.

It carries out the reaction N-(5-phospho-beta-D-ribosyl)anthranilate = 1-(2-carboxyphenylamino)-1-deoxy-D-ribulose 5-phosphate. The enzyme catalyses 1-(2-carboxyphenylamino)-1-deoxy-D-ribulose 5-phosphate + H(+) = (1S,2R)-1-C-(indol-3-yl)glycerol 3-phosphate + CO2 + H2O. The protein operates within amino-acid biosynthesis; L-tryptophan biosynthesis; L-tryptophan from chorismate: step 3/5. It functions in the pathway amino-acid biosynthesis; L-tryptophan biosynthesis; L-tryptophan from chorismate: step 4/5. Its function is as follows. Bifunctional enzyme that catalyzes two sequential steps of tryptophan biosynthetic pathway. In Phytophthora nicotianae (Potato buckeye rot agent), this protein is Tryptophan biosynthesis protein TRP1 (TRP1).